Consider the following 50-residue polypeptide: uncharacterized protein (50 aa).

This is an uncharacterized protein from Rickettsia prowazekii (strain Madrid E).